A 424-amino-acid polypeptide reads, in one-letter code: UPF0415 protein C7orf25 homolog (424 aa).

The protein belongs to the UPF0415 family.

This Xenopus laevis (African clawed frog) protein is UPF0415 protein C7orf25 homolog.